Here is a 740-residue protein sequence, read N- to C-terminus: MAAFSEMGVMPEIAQAVEEMDWLLPTDIQAESIPLILGGGDVLMAAETGSGKTGAFSIPVIQIVYETLKDQQEGKKGKASVKTGSTVLNKWQMNPYDRGSAFAIGSDGLCCQSREIKEWHGCRSTRGVNKGKYYYEVSCHDQGLCRVGWSTLSASLDLGTDKFGFGFGGTGKKSHNKQFDNYGEEFTMHDTIGCYLDIDNSIVKFSKNGKDLGLAFQIPSHMKNQAFFTSCVLKNAELKFNFGEEDFKFPPKDGFVALSKAPDGHVVKSQNTGSAQVSQTKSLPNAPKALIIEPSRELAEQTLNNVKQFKKYVDNPKLRELLIIGGVAAKEQLTILENGVDIVVGTPGRIDDLISTGKLSLSQVRFLVLDEADGLLSQGYSDFINRIYGQIPQITSDGKRLQVIVCSATLHSFDVKKLSEKIMHFPTWVDLKGEDSVPETVHHVVVPVNPKKDKQWEKLAKNHIRTDGVHDKDNTRPGGNSAEVWSEAIKVLKGEYIVRAIKEHKMDQAIIFCRTKLDCDNMEQYFIQQGGGPDKKGHQFSCVCLHSDRKPPERKHNLERFKKCEVRFLICTDVAARGIDIRGVPYVINVTLPDEKQNYVHRIGRVGRAERMGLAISLVASEKEKVWYHVCSSRGKGCYNTRLKEDGGCTIWYNEMQLLSEIEEHLTCTISQVEPDIKVPLDDFDGKVVYGQRRATGGGLYKGHVDILAPTVQELASLEKEAQTSFLHLGYLSNQLFRSF.

The interaction with dsRNA stretch occupies residues 1–448; that stretch reads MAAFSEMGVM…ETVHHVVVPV (448 aa). One can recognise a Helicase ATP-binding domain in the interval 2–428; that stretch reads AAFSEMGVMP…SEKIMHFPTW (427 aa). 46-53 contacts ATP; sequence AETGSGKT. A B30.2/SPRY domain is found at 70–247; it reads DQQEGKKGKA…LKFNFGEEDF (178 aa). The DEAD box motif lies at 370–373; that stretch reads DEAD. The Helicase C-terminal domain maps to 493-681; sequence KGEYIVRAIK…QVEPDIKVPL (189 aa).

Belongs to the DEAD box helicase family. DDX1 subfamily.

It is found in the nucleus. Its subcellular location is the cytoplasm. It localises to the cytoplasmic granule. The protein resides in the cytosol. The protein localises to the mitochondrion. The enzyme catalyses ATP + H2O = ADP + phosphate + H(+). Its function is as follows. Acts as an ATP-dependent RNA helicase, able to unwind both RNA-RNA and RNA-DNA duplexes. Possesses 5' single-stranded RNA overhang nuclease activity. Acts as a positive regulator of transcription. May be involved in 3'-end cleavage and polyadenylation of pre-mRNAs. Binds DNA and RNA. Component of the tRNA-splicing ligase complex required to facilitate the enzymatic turnover of catalytic subunit rtcb. Binds (via helicase ATP-binding domain) on both short and long poly(I:C) dsRNA. This is ATP-dependent RNA helicase DDX1 (ddx1) from Xenopus laevis (African clawed frog).